The chain runs to 331 residues: ADP-L-glycero-D-manno-heptose-6-epimerase (331 aa).

NADP(+) is bound by residues phenylalanine 11–isoleucine 12, aspartate 32–asparagine 33, lysine 39, lysine 54, glutamate 75–serine 79, and asparagine 92. The active-site Proton acceptor is tyrosine 139. Lysine 143 contributes to the NADP(+) binding site. Asparagine 168 is a binding site for substrate. The NADP(+) site is built by valine 169 and lysine 177. The active-site Proton acceptor is lysine 177. Substrate-binding positions include arginine 179, histidine 186, phenylalanine 200–tyrosine 203, arginine 213, and tyrosine 292.

Belongs to the NAD(P)-dependent epimerase/dehydratase family. HldD subfamily. As to quaternary structure, homopentamer. Requires NADP(+) as cofactor.

It catalyses the reaction ADP-D-glycero-beta-D-manno-heptose = ADP-L-glycero-beta-D-manno-heptose. The protein operates within nucleotide-sugar biosynthesis; ADP-L-glycero-beta-D-manno-heptose biosynthesis; ADP-L-glycero-beta-D-manno-heptose from D-glycero-beta-D-manno-heptose 7-phosphate: step 4/4. Its function is as follows. Catalyzes the interconversion between ADP-D-glycero-beta-D-manno-heptose and ADP-L-glycero-beta-D-manno-heptose via an epimerization at carbon 6 of the heptose. The polypeptide is ADP-L-glycero-D-manno-heptose-6-epimerase (Cupriavidus taiwanensis (strain DSM 17343 / BCRC 17206 / CCUG 44338 / CIP 107171 / LMG 19424 / R1) (Ralstonia taiwanensis (strain LMG 19424))).